A 200-amino-acid chain; its full sequence is NADH-quinone oxidoreductase subunit C 1 (200 aa).

Belongs to the complex I 30 kDa subunit family. In terms of assembly, NDH-1 is composed of 14 different subunits. Subunits NuoB, C, D, E, F, and G constitute the peripheral sector of the complex.

The protein resides in the cell inner membrane. It catalyses the reaction a quinone + NADH + 5 H(+)(in) = a quinol + NAD(+) + 4 H(+)(out). Its function is as follows. NDH-1 shuttles electrons from NADH, via FMN and iron-sulfur (Fe-S) centers, to quinones in the respiratory chain. The immediate electron acceptor for the enzyme in this species is believed to be ubiquinone. Couples the redox reaction to proton translocation (for every two electrons transferred, four hydrogen ions are translocated across the cytoplasmic membrane), and thus conserves the redox energy in a proton gradient. This chain is NADH-quinone oxidoreductase subunit C 1, found in Rhizobium etli (strain CIAT 652).